Here is a 23-residue protein sequence, read N- to C-terminus: Defensin-like protein 2 (23 aa).

At glutamine 1 the chain carries Pyrrolidone carboxylic acid.

This sequence belongs to the DEFL family. In terms of assembly, forms oligomers in its native state.

Functionally, possesses antifungal activity sensitive to inorganic cations. This is Defensin-like protein 2 from Brassica napus (Rape).